Here is a 739-residue protein sequence, read N- to C-terminus: Platelet endothelial cell adhesion molecule (739 aa).

The N-terminal stretch at 1-27 is a signal peptide; that stretch reads MQLRWTQRGMMWLGALLTLLLCSSLKG. Residues 28 to 599 are Extracellular-facing; sequence QENSFTINSI…TVRVYLPLEK (572 aa). Ig-like C2-type domains follow at residues 35–120, 145–213, and 236–315; these read NSIH…EKTT, GGVV…IFSG, and PKFH…SKVS. N-linked (GlcNAc...) asparagine glycosylation is found at Asn-52, Asn-84, and Asn-151. A disulfide bridge connects residues Cys-57 and Cys-109. Cystine bridges form between Cys-152–Cys-206 and Cys-256–Cys-304. N-linked (GlcNAc...) asparagine glycans are attached at residues Asn-301, Asn-320, Asn-356, Asn-371, Asn-435, Asn-446, Asn-453, Asn-550, and Asn-578. 3 Ig-like C2-type domains span residues 328-403, 424-493, and 499-590; these read PKLE…VQIT, GQTI…EVLR, and PVDE…NTLT. 3 disulfides stabilise this stretch: Cys-347-Cys-386, Cys-431-Cys-476, and Cys-522-Cys-571. A helical membrane pass occupies residues 600–618; sequence GLIAVVVIGVIIVTLVLGA. Over 619–739 the chain is Cytoplasmic; the sequence is KCYFLKKAKA…SRTEGSLDGS (121 aa). Cys-620 is lipidated: S-palmitoyl cysteine. 2 short sequence motifs (ITIM motif) span residues 687-692 and 712-717; these read VEYTEV and TVYSEI. Residues Tyr-689 and Tyr-714 each carry the phosphotyrosine; by FER modification. Residues 708-730 form a membrane-bound segment which detaches upon phosphorylation region; that stretch reads TETETVYSEIRKADPDFVENRYS. A may play a role in cytoprotective signaling region spans residues 722–739; it reads PDFVENRYSRTEGSLDGS. Residues Ser-730 and Ser-735 each carry the phosphoserine modification.

As to quaternary structure, trans-homodimer (via Ig-like C2-type 1 and Ig-like C2-type 2 domains); trans-homodimerization is required for cell-cell interaction. Forms a complex with BDKRB2 and GNAQ. Interacts with BDKRB2 and GNAQ. Interacts with PTPN11; Tyr-714 is critical for PTPN11 recruitment. Interacts with FER. Interacts with CD177; the interaction is Ca(2+)-dependent; the interaction is direct. Post-translationally, phosphorylated on Ser and Tyr residues by src kinases after cellular activation. Upon activation, phosphorylated on Ser-730 which probably initiates the dissociation of the membrane-interaction segment (residues 708-730) from the cell membrane allowing the sequential phosphorylation of Tyr-714 and Tyr-689. Constitutively phosphorylated on Ser-735 in resting platelets. Phosphorylated on tyrosine residues by FER and FES in response to FCER1 activation. In endothelial cells Fyn mediates mechanical-force (stretch or pull) induced tyrosine phosphorylation. Palmitoylation by ZDHHC21 is necessary for cell surface expression in endothelial cells and enrichment in membrane rafts.

The protein localises to the cell membrane. It localises to the membrane raft. It is found in the cell junction. Its function is as follows. Cell adhesion molecule which is required for leukocyte transendothelial migration (TEM) under most inflammatory conditions. Tyr-689 plays a critical role in TEM and is required for efficient trafficking of PECAM1 to and from the lateral border recycling compartment (LBRC) and is also essential for the LBRC membrane to be targeted around migrating leukocytes. Trans-homophilic interaction may play a role in endothelial cell-cell adhesion via cell junctions. Heterophilic interaction with CD177 plays a role in transendothelial migration of neutrophils. Homophilic ligation of PECAM1 prevents macrophage-mediated phagocytosis of neighboring viable leukocytes by transmitting a detachment signal. Promotes macrophage-mediated phagocytosis of apoptotic leukocytes by tethering them to the phagocytic cells; PECAM1-mediated detachment signal appears to be disabled in apoptotic leukocytes. Modulates bradykinin receptor BDKRB2 activation. Regulates bradykinin- and hyperosmotic shock-induced ERK1/2 activation in endothelial cells. Induces susceptibility to atherosclerosis. The sequence is that of Platelet endothelial cell adhesion molecule (PECAM1) from Bos taurus (Bovine).